Here is a 205-residue protein sequence, read N- to C-terminus: ATP phosphoribosyltransferase (205 aa).

Belongs to the ATP phosphoribosyltransferase family. Short subfamily. Heteromultimer composed of HisG and HisZ subunits.

It is found in the cytoplasm. It carries out the reaction 1-(5-phospho-beta-D-ribosyl)-ATP + diphosphate = 5-phospho-alpha-D-ribose 1-diphosphate + ATP. It functions in the pathway amino-acid biosynthesis; L-histidine biosynthesis; L-histidine from 5-phospho-alpha-D-ribose 1-diphosphate: step 1/9. Catalyzes the condensation of ATP and 5-phosphoribose 1-diphosphate to form N'-(5'-phosphoribosyl)-ATP (PR-ATP). Has a crucial role in the pathway because the rate of histidine biosynthesis seems to be controlled primarily by regulation of HisG enzymatic activity. In Staphylococcus carnosus (strain TM300), this protein is ATP phosphoribosyltransferase.